Reading from the N-terminus, the 210-residue chain is Glutathione S-transferase P 10 (210 aa).

The GST N-terminal domain maps to 2–81; it reads AVPQLYYFTI…HLGRVHGLNG (80 aa). Glutathione contacts are provided by residues Y8, W41, K45, 52-53, and 65-66; these read QL and QT. A GST C-terminal domain is found at 83-200; the sequence is NEQEATFLDM…YLEKRKADKV (118 aa).

The protein belongs to the GST superfamily. Pi family. Homodimer. In terms of tissue distribution, expressed in cells at the mouth and adjacent to the pharyngeal bulbs of the head and also in the tail.

The enzyme catalyses RX + glutathione = an S-substituted glutathione + a halide anion + H(+). Its function is as follows. Conjugation of reduced glutathione to a wide number of exogenous and endogenous hydrophobic electrophiles. Responsible for approximately one-third of 4-hydroxy-2-nonenal conjugation. May play a role in the detoxification of reactive oxygen species produced during pathogenic bacterial infection. The chain is Glutathione S-transferase P 10 from Caenorhabditis elegans.